Here is an 872-residue protein sequence, read N- to C-terminus: Armadillo repeat-containing protein 3 (872 aa).

12 ARM repeats span residues 15–54, 57–96, 98–138, 140–179, 181–220, 222–262, 264–304, 306–345, 346–385, 388–427, 429–468, and 470–509; these read DVFDPLMIESKKAATVVLMLNSPEEEILAKACEAIYKFAL, EENKTTLLELGAVEPLTKLLTHEDKIVRRNATMIFGILAS, NDVK…NMSA, YTSKVQIFEHGGLEPLIRLLSSPDPDVKKNSMECIYNLVQ, FQCRAKLQELNAIPPILDLLKSEYPVIQLLALKTLGVIAN, KESR…NCLE, MDTM…KAAY, PENRKLFHEQEVEKCLVALLGSENDGTKIAASQAISAMCE, NSGSKDFFNNQGIPQLIQLLKSDNEEVREAAALALANLTT, PANANAAAEADGIDPLINLLSSKRDGAIANAATVLTNMAM, EPLRLNIQNHDIMHAIISPLRSANTVVQSKAALAVTATAC, and VEARTELRNSGGLEPLVELLRSKNDEVRKHASWAVMVCAG. Residues C507 and C518 are each lipidated (S-palmitoyl cysteine). The disordered stretch occupies residues 610–693; sequence VSPPSSMEDK…SKGKKEEEKV (84 aa). Residues 626 to 635 are compositionally biased toward low complexity; sequence RSISSSSSLR. Over residues 636-646 the composition is skewed to basic residues; it reads RSSKEKNKKNS. The segment covering 675–693 has biased composition (basic and acidic residues); that stretch reads ATKEKGWRKSKGKKEEEKV.

As to quaternary structure, homodimer. Interacts with PIK3C3, PIK3R4 and BECN1. Interacts (via ARM domains) with ATG14. In terms of processing, palmitoylation is important for its function in autophagy. As to expression, expressed in skeletal muscle, brain, lung, kidney, prostate and testis. In terms of tissue distribution, mainly expressed in skeletal muscle, liver, spleen and thymus. Expressed only in the testis among normal tissues but is expressed frequently in various cancer tissues and, particularly, in pancreatic, lung and endometrial cancers.

Its function is as follows. Essential for male fertility and sperm motility. During spermatogenesis, promotes the autophagic degradation of excessive ribosomes, providing energy resources for mitochondria and thus ensuring sperm flagellar motility. In Homo sapiens (Human), this protein is Armadillo repeat-containing protein 3 (ARMC3).